Reading from the N-terminus, the 331-residue chain is Threonine-phosphate decarboxylase (331 aa).

Lys192 carries the post-translational modification N6-(pyridoxal phosphate)lysine.

The protein belongs to the class-I pyridoxal-phosphate-dependent aminotransferase family. Homodimer. Requires pyridoxal 5'-phosphate as cofactor.

It is found in the cytoplasm. It catalyses the reaction O-phospho-L-threonine + H(+) = (R)-1-aminopropan-2-yl phosphate + CO2. Its pathway is cofactor biosynthesis; adenosylcobalamin biosynthesis. Functionally, decarboxylates L-threonine-O-3-phosphate to yield (R)-1-amino-2-propanol O-2-phosphate, the precursor for the linkage between the nucleotide loop and the corrin ring in cobalamin. This Pseudomonas aeruginosa (strain ATCC 15692 / DSM 22644 / CIP 104116 / JCM 14847 / LMG 12228 / 1C / PRS 101 / PAO1) protein is Threonine-phosphate decarboxylase (cobC).